The sequence spans 291 residues: UDP-N-acetylenolpyruvoylglucosamine reductase (291 aa).

The 166-residue stretch at 22–187 (RIGGPARYFK…ASATFQLTKD (166 aa)) folds into the FAD-binding PCMH-type domain. Arginine 166 is an active-site residue. Catalysis depends on cysteine 214, which acts as the Proton donor. The active site involves glutamate 283.

Belongs to the MurB family. The cofactor is FAD.

The protein resides in the cytoplasm. The enzyme catalyses UDP-N-acetyl-alpha-D-muramate + NADP(+) = UDP-N-acetyl-3-O-(1-carboxyvinyl)-alpha-D-glucosamine + NADPH + H(+). It participates in cell wall biogenesis; peptidoglycan biosynthesis. Functionally, cell wall formation. The chain is UDP-N-acetylenolpyruvoylglucosamine reductase from Chlamydia trachomatis serovar L2 (strain ATCC VR-902B / DSM 19102 / 434/Bu).